Here is a 1165-residue protein sequence, read N- to C-terminus: Pesticidal crystal protein Cry1Da (1165 aa).

It belongs to the delta endotoxin family.

Functionally, promotes colloidosmotic lysis by binding to the midgut epithelial cells of many lepidopteran larvae. This is Pesticidal crystal protein Cry1Da (cry1Da) from Bacillus thuringiensis subsp. aizawai.